The primary structure comprises 643 residues: MPTIKFIDGTCRVYPGSISVLDILKDVSPNSVQDFMFGCVNGISVDRNAIVTNDSIVKFVYKTDQSTLDIIRYSCICLLGKAVKKLWPSSKIGESDVLENGFFCDIEVDFSFNETSLHLLEACMRQMINKKYKIYTKTFSLKKASTIFKNRNETYKLFLLDRLVNFSNQVVSLCFHEEYIDIQKKISVPNIFLCRNFRLQKFSGVYWKGKRENKVLQRIYGTSWITRIQLEKHLDNVKKLDSRDHRKISKILDLYHIQEDLPGMIFWHRNGWIVFQELKKLIRVKLRKYNYQEVKTPVMMNKKIWKDSGHLDNYKESMFMVCSSNFEYGIKPMNCPGHVQIFNHVVRSYRDLPIRISEFGSCHRNEPSGALHGLMRIRNFTQDDAHIFCREDQICSEVSNCIRMVYEIYKIFGFKKILVRLSTRPKNRIGNDNIWDKAENDLATSLRESKIEFEYQHGEGAFYGPKIELSLFDSLGRVWQCATIQLDFCLPINLKAFYIDHNNERKVPIIVHRAVLGSIERFIGILIEEYIGNFPTWLAPIQVVLANVNSNHLQYIKLLYKEFYALGIRSEIDSRNETISYKIREHIARKIPYIIICGDKEVKNNTITLRTRSGKNFYCIDVQFFISKLCKEINSYSCSLMEE.

The 61-residue stretch at 1–61 (MPTIKFIDGT…TNDSIVKFVY (61 aa)) folds into the TGS domain. The catalytic stretch occupies residues 244-535 (DHRKISKILD…LIEEYIGNFP (292 aa)). Zn(2+) is bound by residues cysteine 335, histidine 386, and histidine 512.

It belongs to the class-II aminoacyl-tRNA synthetase family. Homodimer. Zn(2+) serves as cofactor.

The protein localises to the cytoplasm. It carries out the reaction tRNA(Thr) + L-threonine + ATP = L-threonyl-tRNA(Thr) + AMP + diphosphate + H(+). Catalyzes the attachment of threonine to tRNA(Thr) in a two-step reaction: L-threonine is first activated by ATP to form Thr-AMP and then transferred to the acceptor end of tRNA(Thr). Also edits incorrectly charged L-seryl-tRNA(Thr). The polypeptide is Threonine--tRNA ligase (Buchnera aphidicola subsp. Baizongia pistaciae (strain Bp)).